Reading from the N-terminus, the 206-residue chain is Large ribosomal subunit protein uL4 (206 aa).

The segment at 48 to 75 (TQSAKTRAEVSGGGIKPWRQKGTGRARQ) is disordered.

It belongs to the universal ribosomal protein uL4 family. Part of the 50S ribosomal subunit.

One of the primary rRNA binding proteins, this protein initially binds near the 5'-end of the 23S rRNA. It is important during the early stages of 50S assembly. It makes multiple contacts with different domains of the 23S rRNA in the assembled 50S subunit and ribosome. In terms of biological role, forms part of the polypeptide exit tunnel. The sequence is that of Large ribosomal subunit protein uL4 from Clostridium botulinum (strain Loch Maree / Type A3).